A 411-amino-acid polypeptide reads, in one-letter code: 2-oxoglutarate-dependent dioxygenase AOP3 (411 aa).

Positions 259–356 (GNASVGAKEA…RYAAALFSNP (98 aa)) constitute a Fe2OG dioxygenase domain. Positions 279, 281, and 336 each coordinate Fe cation. R347 provides a ligand contact to 2-oxoglutarate.

Belongs to the iron/ascorbate-dependent oxidoreductase family. The cofactor is Fe(2+). In terms of tissue distribution, not expressed.

In terms of biological role, 2-oxoglutarate-dependent dioxygenase involved in glucosinolates biosynthesis. Catalyzes the conversion of methylsulfinylalkyl glucosinolates to hydroxyalkyl glucosinolates. The sequence is that of 2-oxoglutarate-dependent dioxygenase AOP3 (AOP3) from Arabidopsis thaliana (Mouse-ear cress).